Here is a 634-residue protein sequence, read N- to C-terminus: Sodium-dependent neutral amino acid transporter B(0)AT1 (634 aa).

Topologically, residues 1–41 (MVRLVLPNPGLDTRILSLAELETIEQEEASSRPKWDNKAQY) are cytoplasmic. Ser-17 is modified (phosphoserine). The helical transmembrane segment at 42 to 62 (LLTCVGFCVGLGNVWRFPYLC) threads the bilayer. Over 63-65 (QSH) the chain is Extracellular. A helical membrane pass occupies residues 66–86 (GGGAFMIPFLILLVLEGIPLL). At 87 to 120 (HLEFAIGQRLRRGSLGVWSSIHPALKGVGLTSML) the chain is on the cytoplasmic side. The helical transmembrane segment at 121 to 141 (VSFVVGLYYNTIISWIMWYLF) threads the bilayer. At 142 to 192 (NSFQEPLPWSECPLNENQTGYVDECARSSPVDYFWYRETLNISTSISDSGS) the chain is on the extracellular side. 2 N-linked (GlcNAc...) asparagine glycosylation sites follow: Asn-158 and Asn-182. The helical transmembrane segment at 193–213 (IQWRMLLCLACAWSVLYMCTI) threads the bilayer. At 214 to 221 (RGIETTGK) the chain is on the cytoplasmic side. The helical transmembrane segment at 222–242 (VVYITSTLPYVVLTIFLIRGL) threads the bilayer. Residues 243–268 (TLKGATKGIIYLFTPNVTELANPVTW) lie on the Extracellular side of the membrane. An N-linked (GlcNAc...) asparagine glycan is attached at Asn-258. Residues 269-289 (LDAGAQVFFSFSLAFGGLISF) form a helical membrane-spanning segment. The Cytoplasmic segment spans residues 290–304 (SSYNSVHNNCERDSV). Residues 305–325 (IVSIINGFTSVYVAIVIYSII) traverse the membrane as a helical segment. Topologically, residues 326–413 (GFRATQRYDD…TEAITKMPVS (88 aa)) are extracellular. N-linked (GlcNAc...) asparagine glycans are attached at residues Asn-354 and Asn-368. Residues 414 to 434 (PLWSVLFFIMLFCLGLSSMFG) traverse the membrane as a helical segment. Over 435-456 (NMEGVVVPLQDLKVIPPKWPKE) the chain is Cytoplasmic. A helical transmembrane segment spans residues 457 to 477 (LLTGLICLGTFLIGFIFTLNS). Residues 478–487 (GQYWLSLLDS) are Extracellular-facing. Residues 488–508 (YAVSIPLLIIAFCEMFSVVYV) form a helical membrane-spanning segment. The Cytoplasmic portion of the chain corresponds to 509–531 (YGVDRFNKDIEFMIGHKPNIFWQ). A helical transmembrane segment spans residues 532–552 (VTWRVVSPLLMLIILVFFFVV). Topologically, residues 553 to 581 (QVSQELTYSIWNPGYEEFPKSQKISHPNW) are extracellular. A helical membrane pass occupies residues 582–602 (VYAVVVIVAGVPSLTIPSYAI). The Cytoplasmic segment spans residues 603–634 (YKLIRNCCQKPGDRQGLVSTLSTASMNGDLKY). Ser-627 carries the phosphoserine modification.

It belongs to the sodium:neurotransmitter symporter (SNF) (TC 2.A.22) family. SLC6A19 subfamily. In terms of assembly, interacts in a tissue-specific manner with ACE2 in small intestine and with CLTRN in the kidney. Interacts with CLTRN; this interaction is required for trafficking of SLC6A19 to the plasma membrane and for its catalytic activation in kidneys. Interacts with ACE2; this interaction is required for trafficking of SLC6A19 to the plasma membrane and for its catalytic activation in intestine. Interacts with ANPEP; the interaction positively regulates its amino acid transporter activity.

Its subcellular location is the membrane. It catalyses the reaction L-alanine(in) + Na(+)(in) = L-alanine(out) + Na(+)(out). It carries out the reaction L-cysteine(in) + Na(+)(in) = L-cysteine(out) + Na(+)(out). The catalysed reaction is L-glutamine(in) + Na(+)(in) = L-glutamine(out) + Na(+)(out). The enzyme catalyses glycine(in) + Na(+)(in) = glycine(out) + Na(+)(out). It catalyses the reaction L-isoleucine(in) + Na(+)(in) = L-isoleucine(out) + Na(+)(out). It carries out the reaction L-leucine(in) + Na(+)(in) = L-leucine(out) + Na(+)(out). The catalysed reaction is L-methionine(in) + Na(+)(in) = L-methionine(out) + Na(+)(out). The enzyme catalyses L-phenylalanine(in) + Na(+)(in) = L-phenylalanine(out) + Na(+)(out). It catalyses the reaction L-serine(in) + Na(+)(in) = L-serine(out) + Na(+)(out). It carries out the reaction L-tryptophan(in) + Na(+)(in) = L-tryptophan(out) + Na(+)(out). The catalysed reaction is L-tyrosine(in) + Na(+)(in) = L-tyrosine(out) + Na(+)(out). The enzyme catalyses L-valine(in) + Na(+)(in) = L-valine(out) + Na(+)(out). Transporter that mediates resorption of neutral amino acids across the apical membrane of renal and intestinal epithelial cells. This uptake is sodium-dependent and chloride-independent. Requires CLTRN in kidney or ACE2 in intestine for cell surface expression and amino acid transporter activity. The protein is Sodium-dependent neutral amino acid transporter B(0)AT1 (SLC6A19) of Pongo abelii (Sumatran orangutan).